We begin with the raw amino-acid sequence, 148 residues long: Myosin light chain 3, skeletal muscle isoform (148 aa).

Thr1 carries the N-acetylthreonine modification. 2 EF-hand domains span residues 6-41 and 82-117; these read DQIEDFKEAFGLFDRIGDSQVAFNQVADIMRALGQN and GTYDDYVEGLRVFDKEGNGTVMGAELRIVLSTLGEK.

As to quaternary structure, myosin is a hexamer of 2 heavy chains and 4 light chains.

The chain is Myosin light chain 3, skeletal muscle isoform from Chelon ramada (Thin-lipped grey mullet).